The chain runs to 223 residues: UPF0441 protein KPN78578_33850 (223 aa).

A disordered region spans residues 165-223; it reads SYGAAQPGRTMNVPKTAMAPKPATTTTVTRGGFGESVAKQSTMQRSAAGSTSSSRSMGG. 2 stretches are compositionally biased toward low complexity: residues 177-193 and 209-223; these read VPKT…TTVT and RSAA…SMGG.

It belongs to the UPF0441 family.

In Klebsiella pneumoniae subsp. pneumoniae (strain ATCC 700721 / MGH 78578), this protein is UPF0441 protein KPN78578_33850.